We begin with the raw amino-acid sequence, 298 residues long: Protease HtpX homolog (298 aa).

2 consecutive transmembrane segments (helical) span residues 16 to 36 and 38 to 58; these read VMFG…YLFW and SWVS…LIMI. His-144 provides a ligand contact to Zn(2+). Residue Glu-145 is part of the active site. Residue His-148 coordinates Zn(2+). 2 helical membrane-spanning segments follow: residues 159–179 and 197–217; these read IALA…NWFW and IIGL…ASIA. Glu-226 provides a ligand contact to Zn(2+).

It belongs to the peptidase M48B family. It depends on Zn(2+) as a cofactor.

The protein resides in the cell membrane. In Levilactobacillus brevis (strain ATCC 367 / BCRC 12310 / CIP 105137 / JCM 1170 / LMG 11437 / NCIMB 947 / NCTC 947) (Lactobacillus brevis), this protein is Protease HtpX homolog.